An 862-amino-acid polypeptide reads, in one-letter code: MASRGGGGGGDGNSPPPSVSSPDVRPSSPLPATNSSPPQSGRRGGGRRRRGSASPYPSSPSLGGFETPPHPGRRTPSGGAAARQQRQNWTGGRFPPTPSTPMSTDDVPLSSEAGDEDTPETDGGGGGGAGADATPVFVWGTNISVQDVNAAILRFLRHFRDPRDAGRVDPVMDEGKYMRAIHRILELEGGESLDVNAHDVFDHDPDLYGKMVRYPLEVLAIFDIVLMDLVARIEPLFEKHIQTRIYNLKSSVCLRNLNPSDIEKMVSIKGMIIRCSSVIPELKEAVFRCLVCGFYSEPVMVDRGRVTEPHICQKEQCKATNSMTLVHNRCRFADKQIIKLQETPDEIPEGGTPHTVSVLMHDKLVDAGKPGDRVEITGIYRAMSIRVGPTQRTVKSIFKTYIDCLHIKKTDKSRLHVEDSMETDNPNANKTTEDDFLRDKVEKLKELSKLPDIYDRLTRSLAPNIWELDDVKRGLLCQLFGGNALRLPSGASFRGDINILLVGDPGTSKSQLLQYMHKLSPRGIYTSGRGSSAVGLTAYVTKDPETGETVLESGALVLSDKGVCCIDEFDKMSDNARSMLHEVMEQQTVSIAKAGIIASLNARTSVLACANPTESRYNPRLSVIDNIHLPPTLLSRFDLIYLILDKADEQTDRRLAKHIVSLHFENPNIEELEVLDLPTLVAYISYARKHIQPQLSDEAAEELTRGYVEMRKRGNSPGSRKKVITATARQIESLIRLSEALARMRFSEMVEVQDVVEAFRLLEVAMQQSATDHATGTIDMDLIMTGISASERQRRDNLVAATRNLVMEKMQLGGPSVRMIELLEEIRKQSSMEVHLHDLRGALGTLMTEGAVVIHGDSVKRV.

The segment covering M1 to G12 has biased composition (gly residues). A disordered region spans residues M1–D132. Composition is skewed to low complexity over residues S20–G41 and S52–G64. The segment at C289 to C317 adopts a C4-type zinc-finger fold. The region spanning I453–I659 is the MCM domain. G503 to S510 lines the ATP pocket. The Arginine finger signature appears at S635–D638.

Belongs to the MCM family. In terms of assembly, component of the minichromosome maintenance (MCM) complex, a heterotetramer composed of MCM2, MCM3, MCM4, MCM5, MCM6 and MCM7.

It is found in the nucleus. The catalysed reaction is ATP + H2O = ADP + phosphate + H(+). Its function is as follows. Probable component of the MCM2-7 complex (MCM complex) that may function as a DNA helicase and which is essential to undergo a single round of replication initiation and elongation per cell cycle in eukaryotic cells. This Oryza sativa subsp. japonica (Rice) protein is DNA replication licensing factor MCM4 (MCM4).